Consider the following 351-residue polypeptide: UDP-3-O-acylglucosamine N-acyltransferase (351 aa).

Histidine 240 acts as the Proton acceptor in catalysis.

The protein belongs to the transferase hexapeptide repeat family. LpxD subfamily. Homotrimer.

The enzyme catalyses a UDP-3-O-[(3R)-3-hydroxyacyl]-alpha-D-glucosamine + a (3R)-hydroxyacyl-[ACP] = a UDP-2-N,3-O-bis[(3R)-3-hydroxyacyl]-alpha-D-glucosamine + holo-[ACP] + H(+). Its pathway is bacterial outer membrane biogenesis; LPS lipid A biosynthesis. Its function is as follows. Catalyzes the N-acylation of UDP-3-O-acylglucosamine using 3-hydroxyacyl-ACP as the acyl donor. Is involved in the biosynthesis of lipid A, a phosphorylated glycolipid that anchors the lipopolysaccharide to the outer membrane of the cell. This Pseudomonas putida (strain ATCC 700007 / DSM 6899 / JCM 31910 / BCRC 17059 / LMG 24140 / F1) protein is UDP-3-O-acylglucosamine N-acyltransferase.